Reading from the N-terminus, the 259-residue chain is Undecaprenyl-diphosphatase 4 (259 aa).

A run of 8 helical transmembrane segments spans residues 1–21 (MNWLEAFILGIIQGLTEFLPI), 39–59 (AGLFLDTMLHIGTLLAVFIYY), 71–91 (FSKLMLLLIVGTIPAVVIGLL), 99–119 (ISKTGITIGWEFLVTGFFLYV), 133–153 (ITYKDAFIIGSFQAAAIFPAI), 173–193 (AAYFSFLLSTPAIVGAIILQF), 208–228 (SLIVGTLSAAFFGYIAVSWMI), and 239–259 (FAYYVWGLGILILTLQFTDVF).

Belongs to the UppP family.

Its subcellular location is the cell membrane. The enzyme catalyses di-trans,octa-cis-undecaprenyl diphosphate + H2O = di-trans,octa-cis-undecaprenyl phosphate + phosphate + H(+). Catalyzes the dephosphorylation of undecaprenyl diphosphate (UPP). Confers resistance to bacitracin. This is Undecaprenyl-diphosphatase 4 from Bacillus thuringiensis subsp. konkukian (strain 97-27).